The primary structure comprises 383 residues: 3-phytase (383 aa).

An N-terminal signal peptide occupies residues 1-26; the sequence is MNHSKTLLLTAAAGLMLTCGAVSSQA. The propeptide occupies 27-30; the sequence is KHKL. One can recognise a BPP domain in the interval 31–362; it reads SDPYHFTVNA…VPWERIADKI (332 aa). The interval 364-383 is disordered; it reads FHPQVNKQVDPRKMTDRSGK. Residues 372–383 are compositionally biased toward basic and acidic residues; that stretch reads VDPRKMTDRSGK.

It is found in the secreted. It carries out the reaction 1D-myo-inositol hexakisphosphate + H2O = 1D-myo-inositol 1,2,4,5,6-pentakisphosphate + phosphate. The sequence is that of 3-phytase (phy) from Bacillus sp. (strain DS11).